The chain runs to 149 residues: Large ribosomal subunit protein uL15 (149 aa).

The segment covering 1 to 12 has biased composition (basic and acidic residues); that stretch reads MSEPIKLHDLRP. Residues 1–55 are disordered; it reads MSEPIKLHDLRPAKGANKPKTRVGRGEASKGKTAGRGTKGTKARKQVSAAFEGGQ.

This sequence belongs to the universal ribosomal protein uL15 family. Part of the 50S ribosomal subunit.

Its function is as follows. Binds to the 23S rRNA. This Corynebacterium kroppenstedtii (strain DSM 44385 / JCM 11950 / CIP 105744 / CCUG 35717) protein is Large ribosomal subunit protein uL15.